The primary structure comprises 561 residues: Putative cuticle collagen 145 (561 aa).

Positions 1-30 are cleaved as a signal peptide; that stretch reads MEKILVTLSTGAASIAVLAVLFTIPSLYNT. Positions 100 to 112 are enriched in pro residues; the sequence is TCPPGPPGPPGQP. Disordered regions lie at residues 100 to 134, 148 to 271, 367 to 398, and 422 to 540; these read TCPP…TYAP, PQGP…PGGP, TCPP…NTAT, and TGPA…GPGL. Triple-helical region stretches follow at residues 102-127 and 153-276; these read PPGP…KGED and GPEG…LPGN. Low complexity-rich tracts occupy residues 164-209 and 219-265; these read AGPD…PGQD and APGA…DGQP. The segment covering 367–379 has biased composition (pro residues); that stretch reads TCPPGPPGPPGQP. The triple-helical region stretch occupies residues 413–544; the sequence is KCPQGPAGPT…PGGPGLPGND (132 aa). 2 stretches are compositionally biased toward low complexity: residues 422-467 and 486-532; these read TGPA…PGQD and APGA…DGQP. In terms of domain architecture, Collagen-like spans 485–543; sequence GAPGAPGNAGPAGPAGQDGFPGQDGQPGPAGPAGQDGFPGNAGSDGQPGAPGGPGLPGN.

It belongs to the cuticular collagen family. Collagen polypeptide chains are complexed within the cuticle by disulfide bonds and other types of covalent cross-links.

Its function is as follows. Nematode cuticles are composed largely of collagen-like proteins. The cuticle functions both as an exoskeleton and as a barrier to protect the worm from its environment. This is Putative cuticle collagen 145 from Caenorhabditis briggsae.